Consider the following 89-residue polypeptide: Small ribosomal subunit protein uS15 (89 aa).

This sequence belongs to the universal ribosomal protein uS15 family. As to quaternary structure, part of the 30S ribosomal subunit. Forms a bridge to the 50S subunit in the 70S ribosome, contacting the 23S rRNA.

One of the primary rRNA binding proteins, it binds directly to 16S rRNA where it helps nucleate assembly of the platform of the 30S subunit by binding and bridging several RNA helices of the 16S rRNA. Its function is as follows. Forms an intersubunit bridge (bridge B4) with the 23S rRNA of the 50S subunit in the ribosome. This chain is Small ribosomal subunit protein uS15, found in Aeromonas hydrophila subsp. hydrophila (strain ATCC 7966 / DSM 30187 / BCRC 13018 / CCUG 14551 / JCM 1027 / KCTC 2358 / NCIMB 9240 / NCTC 8049).